The primary structure comprises 573 residues: uncharacterized protein (573 aa).

Disordered stretches follow at residues 1–33 (MLQQGSSSRRSLHGNDFHTLTSPSRRDSLSIPR) and 60–101 (LVAN…SRYD). Over residues 60–70 (LVANRSDNNGN) the composition is skewed to polar residues. Asparagine 63 carries N-linked (GlcNAc...) asparagine glycosylation. The segment covering 84 to 95 (SSSTSSLPSTRN) has biased composition (low complexity). Repeat copies occupy residues 102 to 103 (NM), 104 to 105 (NM), 106 to 107 (NM), 108 to 109 (NM), 110 to 111 (NM), 112 to 113 (NM), 114 to 115 (NM), 116 to 117 (NM), 118 to 119 (NM), and 120 to 121 (NM). Residues 102–121 (NMNMNMNMNMNMNMNMNMNM) form a 10 X 2 AA tandem repeats of N-M region. A glycan (N-linked (GlcNAc...) asparagine) is linked at asparagine 123. Disordered stretches follow at residues 150–174 (IPEKYSGSRYSLRSSPPTYSNPRVR), 192–271 (QFPN…IRSN), 286–317 (KSSNSADSVEENSKTKQKRKNPERVVPEPITS), and 357–379 (NNRIPVLPPPRSPNRPTLSDKRT). Residues 157-170 (SRYSLRSSPPTYSN) are compositionally biased toward polar residues. Residues 208-225 (LPPSSTFPDSPSSSSLPL) show a composition bias toward low complexity. Over residues 226–252 (TQTGGPSSADNDSIATGTNNRSPQQTK) the composition is skewed to polar residues. An N-linked (GlcNAc...) asparagine glycan is attached at asparagine 236. 2 N-linked (GlcNAc...) asparagine glycosylation sites follow: asparagine 437 and asparagine 442. Low complexity-rich tracts occupy residues 441–457 (INSSISSPAPSSSSSSS) and 466–483 (SISSSPTPAPSSGSSKSK). Positions 441-483 (INSSISSPAPSSSSSSSLVSRGPMQSISSSPTPAPSSGSSKSK) are disordered. N-linked (GlcNAc...) asparagine glycosylation is found at asparagine 498, asparagine 535, and asparagine 541.

The protein to yeast AFR1. In terms of processing, N-glycosylated.

This is an uncharacterized protein from Saccharomyces cerevisiae (strain ATCC 204508 / S288c) (Baker's yeast).